We begin with the raw amino-acid sequence, 287 residues long: S-methyl-5'-thioadenosine phosphorylase (287 aa).

Phosphate contacts are provided by residues T13 and 55 to 56 (RH). M186 contacts substrate. Residue T187 coordinates phosphate. Position 210 to 212 (210 to 212 (DYD)) interacts with substrate.

It belongs to the PNP/MTAP phosphorylase family. MTAP subfamily. As to quaternary structure, homohexamer. Dimer of a homotrimer.

The catalysed reaction is S-methyl-5'-thioadenosine + phosphate = 5-(methylsulfanyl)-alpha-D-ribose 1-phosphate + adenine. It participates in amino-acid biosynthesis; L-methionine biosynthesis via salvage pathway; S-methyl-5-thio-alpha-D-ribose 1-phosphate from S-methyl-5'-thioadenosine (phosphorylase route): step 1/1. Functionally, catalyzes the reversible phosphorylation of S-methyl-5'-thioadenosine (MTA) to adenine and 5-methylthioribose-1-phosphate. Involved in the breakdown of MTA, a major by-product of polyamine biosynthesis. Responsible for the first step in the methionine salvage pathway after MTA has been generated from S-adenosylmethionine. Has broad substrate specificity with 6-aminopurine nucleosides as preferred substrates. The polypeptide is S-methyl-5'-thioadenosine phosphorylase (Leptospira interrogans serogroup Icterohaemorrhagiae serovar Lai (strain 56601)).